Consider the following 804-residue polypeptide: MKFTLSWLKDHLETDASLDEICDKLTAIGLEVDHVDDRSYLKGFVIAKVLTAIKHPDADKLQILSVDTGADKPVQVICGAPNARAGLVGVLALPGTYVPGLDVTLSVGKIRGIESFGMMCSWAELELSNEHDGIIELPEDVPIGASFAVYAGLDDPVIDIGLTPNRSDCTGVRGIARDLAATGIGRLKELSLPQLGTTFETSLDVSLDFSQSALLCLGFAWCEVRNVQNNASPQWMQQRLNAIGLRPINALVDITNYISFDLGRPLHVFDADKIKGNLRVRCGREGEQLQALNGKVYNLGVKDCVIADEEGVVSIAGIMGGERTSCDETTRRVIIESALWDAQSIAQTGRALGLISDARYRFERGVDPAFMETGLEIATELVLRLCGGEGSKMKIVGYQQPEIRQITFPLSEIKRLTYLEIEHEQTMTILTQLGFDSEGQGNVVVVKVPTWRPDIVGKADLVEEVMRIYGLDKIKPIPLESFMEVKDPVLTVSQLRSRITRFALAGRGMRETVTWSFISEKQALAFGGGQAQLKLVNPISADMSVMRPSLLPGLLVAAQRNADRGFPDFALFEVSNIYEDDTPDKQHRVAGGIRRGTEQFGGAGRFWNGNARAVDVFDAKADALAVLEACGLESGKVQIEVGAPDWYHPGRSGVIKLGSKIILGFFGVFHPATLEKLDISGPLCGFEIFLDRIPEPKKKATKSRSPLKLSSLQMVRRDFAFVVDKMVDSSLIVRAASGADKKLIHSVQVFDVFEDLSLGEEKKSVAIEVALQPIERTLTDEDIEELALKLVENVTRMTGASLRC.

The region spanning 38-148 (RSYLKGFVIA…EDVPIGASFA (111 aa)) is the tRNA-binding domain. In terms of domain architecture, B5 spans 401–476 (PEIRQITFPL…RIYGLDKIKP (76 aa)). D454, D460, E463, and E464 together coordinate Mg(2+). The FDX-ACB domain occupies 710-803 (SSLQMVRRDF…VTRMTGASLR (94 aa)).

The protein belongs to the phenylalanyl-tRNA synthetase beta subunit family. Type 1 subfamily. Tetramer of two alpha and two beta subunits. The cofactor is Mg(2+).

The protein localises to the cytoplasm. The enzyme catalyses tRNA(Phe) + L-phenylalanine + ATP = L-phenylalanyl-tRNA(Phe) + AMP + diphosphate + H(+). In Bartonella henselae (strain ATCC 49882 / DSM 28221 / CCUG 30454 / Houston 1) (Rochalimaea henselae), this protein is Phenylalanine--tRNA ligase beta subunit.